We begin with the raw amino-acid sequence, 274 residues long: Diaminopimelate epimerase (274 aa).

The substrate site is built by N11, Q44, and N64. The active-site Proton donor is the C73. Substrate contacts are provided by residues 74 to 75, N157, N190, and 208 to 209; these read GN and ER. C217 acts as the Proton acceptor in catalysis. 218–219 serves as a coordination point for substrate; sequence GS.

This sequence belongs to the diaminopimelate epimerase family. In terms of assembly, homodimer.

The protein resides in the cytoplasm. The catalysed reaction is (2S,6S)-2,6-diaminopimelate = meso-2,6-diaminopimelate. It participates in amino-acid biosynthesis; L-lysine biosynthesis via DAP pathway; DL-2,6-diaminopimelate from LL-2,6-diaminopimelate: step 1/1. In terms of biological role, catalyzes the stereoinversion of LL-2,6-diaminopimelate (L,L-DAP) to meso-diaminopimelate (meso-DAP), a precursor of L-lysine and an essential component of the bacterial peptidoglycan. This chain is Diaminopimelate epimerase, found in Enterobacter sp. (strain 638).